Consider the following 701-residue polypeptide: Interleukin-1 receptor accessory protein-like 1-A (701 aa).

The N-terminal stretch at 1 to 19 (MTALNPVLFLLCGVSVSLS) is a signal peptide. The Extracellular portion of the chain corresponds to 20–361 (LKVVSKRGSV…IGKRVELMYT (342 aa)). The Ig-like C2-type 1 domain maps to 33–133 (TDWSVDYLKY…RNSTFCMKVS (101 aa)). Cys-54 and Cys-121 are joined by a disulfide. N-linked (GlcNAc...) asparagine glycosylation is found at Asn-64, Asn-125, Asn-141, Asn-216, Asn-267, and Asn-334. Ig-like C2-type domains follow at residues 146–235 (CYNS…TYLS) and 245–353 (PRIL…VQIG). Cysteines 167 and 219 form a disulfide. An intrachain disulfide couples Cys-270 to Cys-337. Residues 362–382 (VELAGGLGAILLLLALLLSVY) form a helical membrane-spanning segment. Over 383–701 (KCYRIELLLC…RETSISSVIW (319 aa)) the chain is Cytoplasmic. The region spanning 407 to 563 (KEYDAYLSYS…RFWKQLRYTM (157 aa)) is the TIR domain. Residue Glu-495 is part of the active site. Positions 568–701 (PQQTITNHAL…RETSISSVIW (134 aa)) are required for synaptic vesicle accumulation during synaptogenesis.

This sequence belongs to the interleukin-1 receptor family.

It localises to the cell membrane. It is found in the cytoplasm. The enzyme catalyses NAD(+) + H2O = ADP-D-ribose + nicotinamide + H(+). Functionally, may regulate secretion and presynaptic differentiation through inhibition of the activity of N-type voltage-gated calcium channel. During presynaptic differentiation may regulate both synaptic vesicle accumulation in axon terminals and subsequent axon terminal remodeling. This chain is Interleukin-1 receptor accessory protein-like 1-A (il1rapl1a), found in Danio rerio (Zebrafish).